Reading from the N-terminus, the 252-residue chain is MFS-type transporter cctQ (252 aa).

2 consecutive transmembrane segments (helical) span residues 54–74 (IGSL…VVLP) and 116–136 (FGSF…IVGF). Residue asparagine 179 is glycosylated (N-linked (GlcNAc...) asparagine). Transmembrane regions (helical) follow at residues 180–200 (FSIC…WILA) and 208–228 (FLVW…YFTT).

Belongs to the major facilitator superfamily.

The protein localises to the membrane. It participates in mycotoxin biosynthesis. Its function is as follows. MFS-type transporter; part of the gene cluster that mediates the biosynthesis of the mycotoxin cyclochlorotine, a hepatotoxic and carcinogenic cyclic chlorinated pentapeptide. Most likely responsible for cyclochlorotine secretion and thereby may contribute to intrinsic resistance. The sequence is that of MFS-type transporter cctQ from Talaromyces islandicus (Penicillium islandicum).